Here is a 231-residue protein sequence, read N- to C-terminus: 5'-methylthioadenosine/S-adenosylhomocysteine nucleosidase (231 aa).

Residue E12 is the Proton acceptor of the active site. Substrate-binding positions include G78, V153, and 174 to 175; that span reads ME. The active-site Proton donor is the D198.

This sequence belongs to the PNP/UDP phosphorylase family. MtnN subfamily.

It catalyses the reaction S-adenosyl-L-homocysteine + H2O = S-(5-deoxy-D-ribos-5-yl)-L-homocysteine + adenine. It carries out the reaction S-methyl-5'-thioadenosine + H2O = 5-(methylsulfanyl)-D-ribose + adenine. The enzyme catalyses 5'-deoxyadenosine + H2O = 5-deoxy-D-ribose + adenine. It participates in amino-acid biosynthesis; L-methionine biosynthesis via salvage pathway; S-methyl-5-thio-alpha-D-ribose 1-phosphate from S-methyl-5'-thioadenosine (hydrolase route): step 1/2. In terms of biological role, catalyzes the irreversible cleavage of the glycosidic bond in both 5'-methylthioadenosine (MTA) and S-adenosylhomocysteine (SAH/AdoHcy) to adenine and the corresponding thioribose, 5'-methylthioribose and S-ribosylhomocysteine, respectively. Also cleaves 5'-deoxyadenosine, a toxic by-product of radical S-adenosylmethionine (SAM) enzymes, into 5-deoxyribose and adenine. In Aliivibrio fischeri (strain MJ11) (Vibrio fischeri), this protein is 5'-methylthioadenosine/S-adenosylhomocysteine nucleosidase.